We begin with the raw amino-acid sequence, 73 residues long: NAD(P)H-quinone oxidoreductase subunit L (73 aa).

The next 2 membrane-spanning stretches (helical) occupy residues 7-27 and 44-64; these read LIGL…PFLF and VLMF…APFM.

It belongs to the complex I NdhL subunit family. In terms of assembly, NDH-1 can be composed of about 15 different subunits; different subcomplexes with different compositions have been identified which probably have different functions.

It is found in the cellular thylakoid membrane. The catalysed reaction is a plastoquinone + NADH + (n+1) H(+)(in) = a plastoquinol + NAD(+) + n H(+)(out). It carries out the reaction a plastoquinone + NADPH + (n+1) H(+)(in) = a plastoquinol + NADP(+) + n H(+)(out). Functionally, NDH-1 shuttles electrons from an unknown electron donor, via FMN and iron-sulfur (Fe-S) centers, to quinones in the respiratory and/or the photosynthetic chain. The immediate electron acceptor for the enzyme in this species is believed to be plastoquinone. Couples the redox reaction to proton translocation, and thus conserves the redox energy in a proton gradient. Cyanobacterial NDH-1 also plays a role in inorganic carbon-concentration. This chain is NAD(P)H-quinone oxidoreductase subunit L, found in Synechococcus sp. (strain JA-3-3Ab) (Cyanobacteria bacterium Yellowstone A-Prime).